Consider the following 342-residue polypeptide: GTPase Obg (342 aa).

The 159-residue stretch at 1–159 (MKFLDLCKVY…RTIWLRLKLI (159 aa)) folds into the Obg domain. The OBG-type G domain occupies 160 to 327 (ADAGLLGLPN…VLRALWAEID (168 aa)). Residues 166-173 (GLPNAGKS), 191-195 (FTTLV), 212-215 (DIPG), 279-282 (NKID), and 308-310 (SGV) each bind GTP. Mg(2+) contacts are provided by Ser173 and Thr193.

The protein belongs to the TRAFAC class OBG-HflX-like GTPase superfamily. OBG GTPase family. As to quaternary structure, monomer. Requires Mg(2+) as cofactor.

The protein localises to the cytoplasm. In terms of biological role, an essential GTPase which binds GTP, GDP and possibly (p)ppGpp with moderate affinity, with high nucleotide exchange rates and a fairly low GTP hydrolysis rate. Plays a role in control of the cell cycle, stress response, ribosome biogenesis and in those bacteria that undergo differentiation, in morphogenesis control. This is GTPase Obg from Cereibacter sphaeroides (strain ATCC 17029 / ATH 2.4.9) (Rhodobacter sphaeroides).